A 32-amino-acid polypeptide reads, in one-letter code: Photosystem I reaction center subunit XII (32 aa).

A helical transmembrane segment spans residues 3–23 (SISDGQIVVALISAFIIVILA).

The protein belongs to the PsaM family.

The protein resides in the plastid. The protein localises to the chloroplast thylakoid membrane. The sequence is that of Photosystem I reaction center subunit XII from Anthoceros angustus (Hornwort).